A 330-amino-acid chain; its full sequence is Probable UDP-3-O-acylglucosamine N-acyltransferase 1, mitochondrial (330 aa).

The N-terminal 52 residues, 1 to 52, are a transit peptide targeting the mitochondrion; the sequence is MANSLRTLFSVSTHGVFLNKRSSYRVRKVFVGMPLRICSEIPRFVSVSCIRS. 160-162 provides a ligand contact to UDP-N-acetyl-alpha-D-glucosamine; sequence FGF. Residues D210 and Q214 each contribute to the hexadecanoate site. H217 serves as the catalytic Proton acceptor. 3 residues coordinate UDP-N-acetyl-alpha-D-glucosamine: N218, S236, and H254.

Belongs to the transferase hexapeptide repeat family. LpxD subfamily. In terms of assembly, homotrimer.

It is found in the mitochondrion. The catalysed reaction is a UDP-3-O-[(3R)-3-hydroxyacyl]-alpha-D-glucosamine + a (3R)-hydroxyacyl-[ACP] = a UDP-2-N,3-O-bis[(3R)-3-hydroxyacyl]-alpha-D-glucosamine + holo-[ACP] + H(+). It participates in glycolipid biosynthesis; lipid IV(A) biosynthesis; lipid IV(A) from (3R)-3-hydroxytetradecanoyl-[acyl-carrier-protein] and UDP-N-acetyl-alpha-D-glucosamine: step 3/6. Involved in the biosynthesis of lipid A, a phosphorylated glycolipid that in bacteria anchors the lipopolysaccharide to the outer membrane of the cell. Lipid A-like molecules in plants may serve as structural components of the outer membranes of mitochondria and/or chloroplasts, or may be involved in signal transduction or plant defense responses. The protein is Probable UDP-3-O-acylglucosamine N-acyltransferase 1, mitochondrial (LPXD1) of Arabidopsis thaliana (Mouse-ear cress).